The sequence spans 560 residues: Chaperonin GroEL 2 (560 aa).

Residues 29 to 32 (TLGP), 86 to 90 (DGTTT), Gly413, 478 to 480 (NAA), and Asp494 each bind ATP.

This sequence belongs to the chaperonin (HSP60) family. In terms of assembly, forms a cylinder of 14 subunits composed of two heptameric rings stacked back-to-back. Interacts with the co-chaperonin GroES.

It is found in the cytoplasm. The enzyme catalyses ATP + H2O + a folded polypeptide = ADP + phosphate + an unfolded polypeptide.. In terms of biological role, together with its co-chaperonin GroES, plays an essential role in assisting protein folding. The GroEL-GroES system forms a nano-cage that allows encapsulation of the non-native substrate proteins and provides a physical environment optimized to promote and accelerate protein folding. The sequence is that of Chaperonin GroEL 2 from Nostoc sp. (strain PCC 7120 / SAG 25.82 / UTEX 2576).